We begin with the raw amino-acid sequence, 149 residues long: Small ribosomal subunit protein eS19 (149 aa).

Belongs to the eukaryotic ribosomal protein eS19 family.

The sequence is that of Small ribosomal subunit protein eS19 (RPS19) from Mya arenaria (Soft-shell clam).